The chain runs to 41 residues: Cytochrome b559 subunit beta (41 aa).

Residues 16–32 form a helical membrane-spanning segment; the sequence is WLAVHALAIPTVFFLGS. His20 contacts heme.

This sequence belongs to the PsbE/PsbF family. In terms of assembly, heterodimer of an alpha subunit and a beta subunit. PSII is composed of 1 copy each of membrane proteins PsbA, PsbB, PsbC, PsbD, PsbE, PsbF, PsbH, PsbI, PsbJ, PsbK, PsbL, PsbM, PsbT, PsbY, PsbZ, Psb30/Ycf12, at least 3 peripheral proteins of the oxygen-evolving complex and a large number of cofactors. It forms dimeric complexes. It depends on heme b as a cofactor.

It localises to the plastid. It is found in the chloroplast thylakoid membrane. In terms of biological role, this b-type cytochrome is tightly associated with the reaction center of photosystem II (PSII). PSII is a light-driven water:plastoquinone oxidoreductase that uses light energy to abstract electrons from H(2)O, generating O(2) and a proton gradient subsequently used for ATP formation. It consists of a core antenna complex that captures photons, and an electron transfer chain that converts photonic excitation into a charge separation. The chain is Cytochrome b559 subunit beta from Euglena gracilis.